The sequence spans 480 residues: Probable pectin lyase F-2 (480 aa).

The first 25 residues, 1–25 (MTLIRTVLMAAALLGASAHAQGVVG), serve as a signal peptide directing secretion. Cys-83 and Cys-106 form a disulfide bridge. Residue Asn-111 is glycosylated (N-linked (GlcNAc...) asparagine). Residue Arg-256 is part of the active site. A disulfide bond links Cys-322 and Cys-330. A compositionally biased stretch (low complexity) spans 386–401 (SSSAIPSSTPAPSSSA). Positions 386-436 (SSSAIPSSTPAPSSSALAKRHGGHDRHGLGHIPHLTEGGPGAWHTPGPAPS) are disordered.

This sequence belongs to the polysaccharide lyase 1 family.

It is found in the secreted. It carries out the reaction Eliminative cleavage of (1-&gt;4)-alpha-D-galacturonan methyl ester to give oligosaccharides with 4-deoxy-6-O-methyl-alpha-D-galact-4-enuronosyl groups at their non-reducing ends.. Pectinolytic enzymes consist of four classes of enzymes: pectin lyase, polygalacturonase, pectin methylesterase and rhamnogalacturonase. Among pectinolytic enzymes, pectin lyase is the most important in depolymerization of pectin, since it cleaves internal glycosidic bonds of highly methylated pectins. This chain is Probable pectin lyase F-2 (pelF-2), found in Aspergillus terreus (strain NIH 2624 / FGSC A1156).